Consider the following 236-residue polypeptide: 15,16-dihydrobiliverdin:ferredoxin oxidoreductase (236 aa).

This sequence belongs to the HY2 family.

It catalyses the reaction 15,16-dihydrobiliverdin + oxidized 2[4Fe-4S]-[ferredoxin] = biliverdin IXalpha + reduced 2[4Fe-4S]-[ferredoxin] + 2 H(+). Functionally, catalyzes the two-electron reduction of biliverdin IX-alpha at the C15 methine bridge. The protein is 15,16-dihydrobiliverdin:ferredoxin oxidoreductase (pebA) of Synechococcus sp. (strain WH8020).